A 427-amino-acid polypeptide reads, in one-letter code: 11-beta-hydroxysteroid dehydrogenase type 2 (427 aa).

82–111 provides a ligand contact to NAD(+); that stretch reads TRAVLITGCDSGFGNATAKKLDAMGFTVLA. Residue Ser-219 participates in substrate binding. The active-site Proton acceptor is the Tyr-232.

Belongs to the short-chain dehydrogenases/reductases (SDR) family. In terms of assembly, interacts with ligand-free cytoplasmic NR3C2. As to expression, highly expressed in the kidney and adrenal and at lower levels in the colon.

The protein resides in the microsome. Its subcellular location is the endoplasmic reticulum. The enzyme catalyses an 11beta-hydroxysteroid + NAD(+) = an 11-oxosteroid + NADH + H(+). The catalysed reaction is corticosterone + NAD(+) = 11-dehydrocorticosterone + NADH + H(+). It catalyses the reaction cortisol + NAD(+) = cortisone + NADH + H(+). It carries out the reaction 11beta,17beta-dihydroxyandrost-4-ene-3-one + NAD(+) = 17beta-hydroxyandrost-4-ene-3,11-dione + NADH + H(+). The enzyme catalyses 11beta-hydroxyandrost-4-ene-3,17-dione + NAD(+) = androst-4-ene-3,11,17-trione + NADH + H(+). It functions in the pathway steroid metabolism. Its activity is regulated as follows. Inhibited by glycyrrhetinic acid, carbenoloxone, 11-alpha-OH-progesterone and 11-beta-OH-progesterone. Catalyzes the conversion of biologically active 11beta-hydroxyglucocorticoids (11beta-hydroxysteroid) such as cortisol, to inactive 11-ketoglucocorticoids (11-oxosteroid) such as cortisone, in the presence of NAD(+). Functions as a dehydrogenase (oxidase), thereby decreasing the concentration of active glucocorticoids, thus protecting the nonselective mineralocorticoid receptor from occupation by glucocorticoids. Plays an important role in maintaining glucocorticoids balance during preimplantation and protects the fetus from excessive maternal corticosterone exposure. Catalyzes the oxidation of 11beta-hydroxytestosterone (11beta,17beta-dihydroxyandrost-4-ene-3-one) to 11-ketotestosterone (17beta-hydroxyandrost-4-ene-3,11-dione), a major bioactive androgen. Catalyzes the conversion of 11beta-hydroxyandrostenedione (11beta-hydroxyandrost-4-ene-3,17-dione) to 11-ketoandrostenedione (androst-4-ene-3,11,17-trione), which can be further metabolized to 11-ketotestosterone. Converts 7-beta-25-dihydroxycholesterol to 7-oxo-25-hydroxycholesterol in vitro. 7-beta-25-dihydroxycholesterol (not 7-oxo-25-hydroxycholesterol) acts as a ligand for the G-protein-coupled receptor (GPCR) Epstein-Barr virus-induced gene 2 (EBI2) and may thereby regulate immune cell migration. May protect ovulating oocytes and fertilizing spermatozoa from the adverse effects of cortisol. This Ovis aries (Sheep) protein is 11-beta-hydroxysteroid dehydrogenase type 2 (HSD11B2).